A 409-amino-acid chain; its full sequence is MVAVRFYAVEMSLPCLCPCPSSPISLSLCSPRFNLLNTTSRRLGLSRNCRTLRISCSSSSTVTDQTQQSSFNDAELKLIDALIGIQGRGKSASPKQLNDVESAVKVLEGLEGIQNPTDSDLIEGRWRLMFTTRPGTASPIQRTFTGVDVFTVFQDVYLKATNDPRVSNIVKFSDFIGELKVEAVASIKDGKRVLFRFDRAAFDLKFLPFKVPYPVPFRLLGDEAKGWLDTTYLSPSGNLRISRGNKGTTFVLQKETVPRQKLLATISQDKGVAEAIDEFLASNSNSAEDNYELLEGSWQMIWSSQMYTDSWIENAANGLMGRQIIEKDGRIKFEVNIIPAFRFSMKGKFIKSESSTYDLKMDDAAIIGGAFGYPVDITNNIELKILYTDEKMRISRGFDNIIFVHIREI.

A chloroplast-targeting transit peptide spans 1–55; it reads MVAVRFYAVEMSLPCLCPCPSSPISLSLCSPRFNLLNTTSRRLGLSRNCRTLRIS.

The protein belongs to the PAP/fibrillin family.

The protein resides in the plastid. Its subcellular location is the chloroplast thylakoid. The protein is Probable plastid-lipid-associated protein 12, chloroplastic (PAP12) of Arabidopsis thaliana (Mouse-ear cress).